Reading from the N-terminus, the 1582-residue chain is SET-binding protein (1582 aa).

4 disordered regions span residues 1–76 (MEPR…WVAG), 124–246 (ITIK…KVPA), 278–416 (LLGS…KRQS), and 446–513 (SNSE…KLSE). Residues 18–27 (EFLQGSSSRS) show a composition bias toward polar residues. Basic and acidic residues predominate over residues 57 to 74 (GSGRDVDCNSNADSEKWV). 2 stretches are compositionally biased toward polar residues: residues 126–141 (IKQS…GKNS) and 213–229 (MEWS…QNCF). Residues 278–298 (LLGSVVPSPSSHNSPATPSSS) show a composition bias toward low complexity. The span at 356–365 (ETTEGKREAY) shows a compositional bias: basic and acidic residues. Over residues 368 to 388 (DSAQEASPARQSISSVSNPEN) the composition is skewed to polar residues. The segment covering 450-465 (GSKKDPRVPKLGKMIE) has biased composition (basic and acidic residues). The segment at residues 575–587 (KKKRGRPKKQPLL) is a DNA-binding region (a.T hook 1). 2 disordered regions span residues 595–617 (GTST…RKRR) and 709–787 (RGTI…ASTE). A compositionally biased stretch (polar residues) spans 770-787 (LSTQLGGSNGNLSPASTE). An N6-acetyllysine modification is found at Lys808. Residues 845 to 871 (SPVSESHSEETIPSDSGIGTDNNSTSD) are compositionally biased toward polar residues. Residues 845–880 (SPVSESHSEETIPSDSGIGTDNNSTSDQAEKSSESR) form a disordered region. A DNA-binding region (a.T hook 2) is located at residues 1007–1019 (KKKRGRPAKTNDT). Disordered stretches follow at residues 1128–1155 (VGGA…DRIL), 1182–1215 (SGSD…VSKN), 1236–1265 (AKDK…TRSE), 1429–1461 (QRQS…RDQM), 1470–1489 (LPSK…EPAS), and 1507–1582 (EAPP…DVLP). The segment covering 1137-1150 (RLHKRKHKHKRKHK) has biased composition (basic residues). A compositionally biased stretch (basic and acidic residues) spans 1182 to 1196 (SGSDKELPLVSEKSK). Basic residues predominate over residues 1439-1448 (VKKRRGRPRK). The a.T hook 3 DNA-binding region spans 1440–1452 (KKRRGRPRKQPSQ). 2 stretches are compositionally biased toward pro residues: residues 1509–1533 (PPLP…PPLP) and 1546–1559 (QPPA…PQPL).

As to quaternary structure, interacts with SET.

The protein resides in the nucleus. The chain is SET-binding protein (Setbp1) from Mus musculus (Mouse).